A 333-amino-acid polypeptide reads, in one-letter code: MHKICVIEGDGIGKEVVPATIQVLEATGLPFEFVYAEAGDEVYKRTGKALPEETIETALDCDAVLFGAAGETAADVIVKLRHILDTYANIRPVKAYKGVKCLRPDIDYVIVRENTEGLYKGIEAEIDEGITIATRVITEKACERIFRFAFNLARERKKMGKEGKVTCAHKANVLKLTDGLFKKIFYKVAEEYDDIKAEDYYIDAMNMYIITKPQVFDVVVTSNLFGDILSDGAAGTVGGLGLAPSANIGDEHGLFEPVHGSAPDIAGKKIANPTATILSAVLMLRYLGEYEAADKVEKALEEVLALGLTTPDLGGNLNTFEMAEEVAKRVREE.

Arginine 81, arginine 91, arginine 112, and aspartate 203 together coordinate substrate. Aspartate 203, aspartate 227, and aspartate 231 together coordinate Mg(2+). 260–272 serves as a coordination point for NAD(+); that stretch reads GSAPDIAGKKIAN.

It belongs to the isocitrate and isopropylmalate dehydrogenases family. Homotetramer. Requires Mg(2+) as cofactor. It depends on Mn(2+) as a cofactor.

It localises to the cytoplasm. The enzyme catalyses (2R,3S)-3-isopropylmalate + NAD(+) = 4-methyl-2-oxopentanoate + CO2 + NADH. It catalyses the reaction (2R,3S)-3-methylmalate + NAD(+) = 2-oxobutanoate + CO2 + NADH. It carries out the reaction (R)-malate + NAD(+) = pyruvate + CO2 + NADH. It functions in the pathway amino-acid biosynthesis; L-leucine biosynthesis; L-leucine from 3-methyl-2-oxobutanoate: step 3/4. The protein operates within amino-acid biosynthesis; L-isoleucine biosynthesis; 2-oxobutanoate from pyruvate: step 3/3. Functionally, catalyzes the oxidation of 3-carboxy-2-hydroxy-4-methylpentanoate (3-isopropylmalate) to 3-carboxy-4-methyl-2-oxopentanoate, which decarboxylates to 4-methyl-2-oxopentanoate (2-oxoisocaproate). Also catalyzes the oxidative decarboxylation of 3-methylmalate to 2-oxobutyrate, and that of D-malate to pyruvate. Cannot use NADP(+) instead of NAD(+). Cannot catalyze the oxidation of L-malate, L-tartrate, D-tartrate, DL-isocitrate, or DL-lactate. This Methanocaldococcus jannaschii (strain ATCC 43067 / DSM 2661 / JAL-1 / JCM 10045 / NBRC 100440) (Methanococcus jannaschii) protein is 3-isopropylmalate/3-methylmalate dehydrogenase (leuB).